An 87-amino-acid chain; its full sequence is UPF0147 protein AF_2370.1 (87 aa).

Belongs to the UPF0147 family.

This chain is UPF0147 protein AF_2370.1, found in Archaeoglobus fulgidus (strain ATCC 49558 / DSM 4304 / JCM 9628 / NBRC 100126 / VC-16).